Reading from the N-terminus, the 409-residue chain is Torsin-4A (409 aa).

Residues 1-16 show a composition bias toward basic and acidic residues; that stretch reads MGEQDPSDRLRGDQLK. Disordered stretches follow at residues 1-28 and 75-99; these read MGEQ…SFSQ and DNLH…KGRV. The segment covering 17–28 has biased composition (polar residues); it reads EPNQNGKGSFSQ. Residues 88 to 98 are compositionally biased toward basic residues; that stretch reads PRKRKKKRKGR. A helical transmembrane segment spans residues 120 to 136; that stretch reads CLYLLCIIVFLQVYNAI. Residue 192–199 coordinates ATP; the sequence is GPTGVGKS.

The protein belongs to the ClpA/ClpB family. Torsin subfamily.

It is found in the membrane. This Danio rerio (Zebrafish) protein is Torsin-4A (tor4a).